The following is a 208-amino-acid chain: Redox-sensing transcriptional repressor Rex (208 aa).

Residues leucine 16–phenylalanine 55 constitute a DNA-binding region (H-T-H motif). Glycine 90–glycine 95 contacts NAD(+).

The protein belongs to the transcriptional regulatory Rex family. As to quaternary structure, homodimer.

It localises to the cytoplasm. Modulates transcription in response to changes in cellular NADH/NAD(+) redox state. The chain is Redox-sensing transcriptional repressor Rex from Pediococcus pentosaceus (strain ATCC 25745 / CCUG 21536 / LMG 10740 / 183-1w).